The chain runs to 141 residues: Large ribosomal subunit protein bL17 (141 aa).

Residues 120-141 are disordered; it reads TSAKGQDSGPVLTADEDEFEAA.

The protein belongs to the bacterial ribosomal protein bL17 family. As to quaternary structure, part of the 50S ribosomal subunit. Contacts protein L32.

The polypeptide is Large ribosomal subunit protein bL17 (Novosphingobium aromaticivorans (strain ATCC 700278 / DSM 12444 / CCUG 56034 / CIP 105152 / NBRC 16084 / F199)).